The following is a 253-amino-acid chain: Electron transfer flavoprotein subunit beta, mitochondrial (253 aa).

It belongs to the ETF beta-subunit/FixA family. In terms of assembly, heterodimer of an alpha and a beta subunit. Requires FAD as cofactor. AMP serves as cofactor.

It localises to the mitochondrion matrix. In terms of biological role, the electron transfer flavoprotein serves as a specific electron acceptor for several dehydrogenases, including five acyl-CoA dehydrogenases, glutaryl-CoA and sarcosine dehydrogenase. It transfers the electrons to the main mitochondrial respiratory chain via ETF-ubiquinone oxidoreductase (ETF dehydrogenase). The chain is Electron transfer flavoprotein subunit beta, mitochondrial (ETFB) from Oryza sativa subsp. indica (Rice).